The following is a 235-amino-acid chain: Large ribosomal subunit protein uL1 (235 aa).

The protein belongs to the universal ribosomal protein uL1 family. In terms of assembly, part of the 50S ribosomal subunit.

Binds directly to 23S rRNA. The L1 stalk is quite mobile in the ribosome, and is involved in E site tRNA release. Its function is as follows. Protein L1 is also a translational repressor protein, it controls the translation of the L11 operon by binding to its mRNA. The polypeptide is Large ribosomal subunit protein uL1 (Synechococcus sp. (strain CC9902)).